Reading from the N-terminus, the 843-residue chain is Urease (843 aa).

Residues 400–843 enclose the Urease domain; the sequence is GGIDCHVHFI…VPLSRNYFLF (444 aa). Positions 405, 407, and 488 each coordinate Ni(2+). The residue at position 488 (Lys488) is an N6-carboxylysine. His490 lines the substrate pocket. Residues His517 and His543 each coordinate Ni(2+). His591 functions as the Proton donor in the catalytic mechanism. A Ni(2+)-binding site is contributed by Asp631.

This sequence in the C-terminal section; belongs to the metallo-dependent hydrolases superfamily. Urease alpha subunit family. In terms of assembly, homohexamer. Other oligomeric forms may exist depending on pH and presence of salts. Ni(2+) is required as a cofactor. Post-translationally, carboxylation allows a single lysine to coordinate two nickel ions.

It catalyses the reaction urea + 2 H2O + H(+) = hydrogencarbonate + 2 NH4(+). It participates in nitrogen metabolism; urea degradation; CO(2) and NH(3) from urea (urease route): step 1/1. Its function is as follows. Urea hydrolase involved in nitrogen recycling from ureide, purine, and arginine catabolism. In Oryza sativa subsp. indica (Rice), this protein is Urease.